The sequence spans 221 residues: Serine/arginine-rich splicing factor 9 (221 aa).

2 RRM domains span residues 14–89 (GRIY…FPRT) and 111–187 (FRVL…PERS). Lysine 36 participates in a covalent cross-link: Glycyl lysine isopeptide (Lys-Gly) (interchain with G-Cter in SUMO2). The segment at 188–200 (TSYGYSRSRSGSR) is interaction with SAFB1. Phosphoserine is present on serine 189. A compositionally biased stretch (low complexity) spans 189-198 (SYGYSRSRSG). The segment at 189 to 221 (SYGYSRSRSGSRGRDSPYQSRGSPHYFSPFRPY) is disordered. The residue at position 192 (tyrosine 192) is a Phosphotyrosine. Phosphoserine is present on residues serine 193, serine 195, serine 204, serine 208, and serine 211. Tyrosine 214 carries the post-translational modification Phosphotyrosine. Serine 216 is modified (phosphoserine).

It belongs to the splicing factor SR family. Interacts with KHDRBS3. Interacts with HABP4. Interacts with NOL3/ARC/NOP30. Interacts with NSEP1/YB-1/YB1. Interacts with SAFB/SAFB1. Interacts with SRSF6/SFRS6. Interacts with TRA2B/SFRS10. Interacts with C1QBP. May also interact with DUSP11/PIR1. In terms of processing, extensively phosphorylated on serine residues in the RS domain. As to expression, expressed at high levels in the heart, kidney, pancreas and placenta, and at lower levels in the brain, liver, lung and skeletal muscle.

The protein resides in the nucleus. Plays a role in constitutive splicing and can modulate the selection of alternative splice sites. Represses the splicing of MAPT/Tau exon 10. This Homo sapiens (Human) protein is Serine/arginine-rich splicing factor 9 (SRSF9).